The primary structure comprises 359 residues: Peptide chain release factor 1 (359 aa).

The residue at position 232 (Gln232) is an N5-methylglutamine.

It belongs to the prokaryotic/mitochondrial release factor family. In terms of processing, methylated by PrmC. Methylation increases the termination efficiency of RF1.

The protein resides in the cytoplasm. In terms of biological role, peptide chain release factor 1 directs the termination of translation in response to the peptide chain termination codons UAG and UAA. In Lawsonia intracellularis (strain PHE/MN1-00), this protein is Peptide chain release factor 1.